Consider the following 316-residue polypeptide: MSIKEELMEIIEAIKYTSEKPEEIVHGKGPRIIVKESRIIDVQGDEGIILEGKEEDGKIKAKIIVKKGYKFKYPIHMCFGITEENISQIIDVEIILEEDSSISLMSHCSFPKGKGIKHIMNGIIKIGKNAKFSYNEFHYHGMDGDILVKPTVKVEIDEGGIYISNFTLTKGRIGTLDIEQEIIAKKDAIIDITTRTYAIKEDVVKVNEVVKLNGENAKCIIKSRGAAMDNSKISLKLKIEGNAPYSKGHIDCAEIVKGNAEVESIPIVVVRDDKARITHEAAIGSVDKKQLETLMAKGLDEDEATEIIVKGMIGDL.

It belongs to the iron-sulfur cluster assembly SufBD family.

The chain is Iron-sulfur cluster assembly SufBD family protein MJ0034 from Methanocaldococcus jannaschii (strain ATCC 43067 / DSM 2661 / JAL-1 / JCM 10045 / NBRC 100440) (Methanococcus jannaschii).